The following is a 709-amino-acid chain: Leucine-rich repeat and calponin homology domain-containing protein 1 (709 aa).

The span at 24-37 shows a compositional bias: basic residues; that stretch reads LHQHHQHHQHHQHH. The segment at 24–49 is disordered; sequence LHQHHQHHQHHQHHGGTGGTGFNLPL. LRR repeat units follow at residues 60-83, 86-108, 109-131, 132-155, 157-176, 177-199, 200-223, 225-244, and 245-268; these read AANS…TAPG, LSDT…ELCQ, FVSL…AIVN, LQML…LCGL, LKVL…EIGQ, LKQL…QIGQ, LKSL…LVDL, LVKF…CFRE, and MKQL…ICTK. Composition is skewed to basic and acidic residues over residues 301 to 312 and 381 to 390; these read HQHVEDSKKDSD and QEREQLAGRA. The segment at 301–390 is disordered; the sequence is HQHVEDSKKD…QEREQLAGRA (90 aa). Residues Ser395, Ser518, and Ser522 each carry the phosphoserine modification. A disordered region spans residues 504–526; it reads SNGSQYSPNEIRENSPSVSPTAN. Thr581 carries the phosphothreonine modification. Positions 589 to 702 constitute a Calponin-homology (CH) domain; sequence MREEKELVEQ…TTVQALLDVT (114 aa).

In terms of assembly, interacts (via LRR repeats) with unphosphorylated DOCK8 (via DHR-2 domain); the interaction prevents the association between DOCK8 and CDC42.

The protein localises to the cytoplasm. In terms of biological role, acts as a negative regulator of GTPase CDC42 by sequestering CDC42-guanine exchange factor DOCK8. Probably by preventing CDC42 activation, negatively regulates CD4(+) T-cell migration in response to chemokine stimulation. The chain is Leucine-rich repeat and calponin homology domain-containing protein 1 (Lrch1) from Mus musculus (Mouse).